Consider the following 101-residue polypeptide: UPF0235 protein Cphamn1_2066 (101 aa).

Belongs to the UPF0235 family.

The polypeptide is UPF0235 protein Cphamn1_2066 (Chlorobium phaeobacteroides (strain BS1)).